The following is a 272-amino-acid chain: Photosystem II extrinsic protein O (272 aa).

A signal peptide spans 1 to 26; sequence MKYRILMATLLAVCLGIFSLSAPAFA.

The protein belongs to the PsbO family. In terms of assembly, PSII is composed of 1 copy each of membrane proteins PsbA, PsbB, PsbC, PsbD, PsbE, PsbF, PsbH, PsbI, PsbJ, PsbK, PsbL, PsbM, PsbT, PsbX, PsbY, PsbZ, Psb30/Ycf12, peripheral proteins PsbO, CyanoQ (PsbQ), PsbU, PsbV and a large number of cofactors. It forms dimeric complexes.

Its subcellular location is the cellular thylakoid membrane. Functionally, one of the extrinsic, lumenal subunits of photosystem II (PSII), which stabilize and protect the oxygen-evolving complex. PSII is a light-driven water plastoquinone oxidoreductase, using light energy to abstract electrons from H(2)O, generating a proton gradient subsequently used for ATP formation. Required for dimerization of PSII and for binding of PsbQ to PSII. This Synechococcus elongatus protein is Photosystem II extrinsic protein O (psbO).